We begin with the raw amino-acid sequence, 1009 residues long: DNA ligase 3 (1009 aa).

Residues 1 to 42 (MSLAFKIFFPQTLRALSRKELCLFRKHHWRDVRQFSQWSETD) constitute a mitochondrion transit peptide. The PARP-type zinc finger occupies 93-185 (FCVDYAKRGT…QITQHIADLS (93 aa)). The Zn(2+) site is built by cysteine 105, cysteine 108, histidine 139, and cysteine 142. Serine 210, serine 216, serine 227, and serine 242 each carry phosphoserine. The tract at residues 224 to 256 (RKFSGFSAKPNNSGEAPSSPTPKRSLSSSKCDP) is disordered. Positions 240-252 (PSSPTPKRSLSSS) are enriched in low complexity. Interaction with DNA stretches follow at residues 277-280 (PSYN), 318-323 (VYNLND), 388-391 (TKED), and 421-427 (KMNSGAK). Glutamate 506 is a binding site for ATP. The active-site N6-AMP-lysine intermediate is lysine 508. The ATP site is built by arginine 513 and arginine 528. Glutamate 560 and glutamate 655 together coordinate Mg(2+). ATP is bound by residues lysine 660, arginine 671, and lysine 675. The segment at 842–917 (AGDEGSSTTG…LATKSSPVKV (76 aa)) is disordered. Composition is skewed to low complexity over residues 845–854 (EGSSTTGGSS) and 863–877 (SAVS…SAST). The segment covering 884–898 (LSNSNSKDGNMQTAK) has biased composition (polar residues). A Phosphoserine modification is found at serine 913. Positions 933-1009 (VLLDIFTGVR…IRKRRLVAPC (77 aa)) constitute a BRCT domain.

Belongs to the ATP-dependent DNA ligase family. In terms of assembly, isoform 3 interacts (via BRCT domain) with the nuclear DNA-repair protein XRCC1. Interacts with POLG. Interacts with POLB. The cofactor is Mg(2+). As to expression, testis, thymus, prostate and heart.

The protein resides in the mitochondrion. It localises to the nucleus. The enzyme catalyses ATP + (deoxyribonucleotide)n-3'-hydroxyl + 5'-phospho-(deoxyribonucleotide)m = (deoxyribonucleotide)n+m + AMP + diphosphate.. Functionally, isoform 3 functions as a heterodimer with DNA-repair protein XRCC1 in the nucleus and can correct defective DNA strand-break repair and sister chromatid exchange following treatment with ionizing radiation and alkylating agents. Isoform 1 is targeted to mitochondria, where it functions as a DNA ligase in mitochondrial base-excision DNA repair. The chain is DNA ligase 3 (LIG3) from Homo sapiens (Human).